Consider the following 116-residue polypeptide: Large ribosomal subunit protein bL20 (116 aa).

This sequence belongs to the bacterial ribosomal protein bL20 family.

Its function is as follows. Binds directly to 23S ribosomal RNA and is necessary for the in vitro assembly process of the 50S ribosomal subunit. It is not involved in the protein synthesizing functions of that subunit. The sequence is that of Large ribosomal subunit protein bL20 from Helicobacter acinonychis (strain Sheeba).